A 73-amino-acid polypeptide reads, in one-letter code: Translation initiation factor IF-1 (73 aa).

In terms of domain architecture, S1-like spans 1–73 (MAKKDGVIEI…TRGRIVYRYK (73 aa)).

Belongs to the IF-1 family. Component of the 30S ribosomal translation pre-initiation complex which assembles on the 30S ribosome in the order IF-2 and IF-3, IF-1 and N-formylmethionyl-tRNA(fMet); mRNA recruitment can occur at any time during PIC assembly.

The protein localises to the cytoplasm. One of the essential components for the initiation of protein synthesis. Stabilizes the binding of IF-2 and IF-3 on the 30S subunit to which N-formylmethionyl-tRNA(fMet) subsequently binds. Helps modulate mRNA selection, yielding the 30S pre-initiation complex (PIC). Upon addition of the 50S ribosomal subunit IF-1, IF-2 and IF-3 are released leaving the mature 70S translation initiation complex. This is Translation initiation factor IF-1 from Clavibacter michiganensis subsp. michiganensis (strain NCPPB 382).